We begin with the raw amino-acid sequence, 99 residues long: Spanin, outer lipoprotein subunit (99 aa).

A signal peptide spans 1-16 (MIKLSAVILSIGLLVG). A lipid anchor (N-palmitoyl cysteine; by host) is attached at cysteine 17. A lipid anchor (S-diacylglycerol cysteine; by host) is attached at cysteine 17. The Periplasmic segment spans residues 18 to 99 (STKPLEVKKE…RQELKEDKCK (82 aa)).

In terms of assembly, interacts (via C-terminus) with the spanin inner membrane subunit (via C-terminus). Part of the spanin complex which spans the entire periplasmic space. The spanin complex is composed of spanin inner membrane subunit and spanin outer membrane subunit.

The protein localises to the host cell outer membrane. Component of the spanin complex that disrupts the host outer membrane and participates in cell lysis during virus exit. The spanin complex conducts the final step in host lysis by disrupting the outer membrane after holin and endolysin action have permeabilized the inner membrane and degraded the host peptidoglycans. Host outer membrane disruption is possibly due to local fusion between the inner and outer membrane performed by the spanin complex. The polypeptide is Spanin, outer lipoprotein subunit (y13J) (Escherichia coli (Bacteriophage T4)).